The primary structure comprises 104 residues: Inclusion membrane protein F (104 aa).

2 helical membrane passes run leucine 39–alanine 59 and leucine 70–isoleucine 90.

It localises to the secreted. The protein resides in the host vacuole. It is found in the host pathogen-containing vacuole. Its subcellular location is the host pathogen-containing vacuole membrane. Its function is as follows. Inclusion membrane protein probably involved in early modification events of the chlamydial inclusion. The sequence is that of Inclusion membrane protein F from Chlamydia trachomatis serovar L2 (strain ATCC VR-902B / DSM 19102 / 434/Bu).